A 199-amino-acid polypeptide reads, in one-letter code: Transcription factor 15 (199 aa).

Positions 25–67 are disordered; it reads EENRSESDASDQSFGCCEGPEAARRGPGPGGGRRAGGGGGAGP. Residues 51–66 show a composition bias toward gly residues; that stretch reads PGPGGGRRAGGGGGAG. The region spanning 72–124 is the bHLH domain; it reads RQRQAANARERDRTQSVNTAFTALRTLIPTEPVDRKLSKIETVRLASSYIAHL.

Heterodimer; efficient DNA binding requires dimerization with another bHLH protein, such as TCF3/E12. Interacts with MEOX2.

The protein resides in the nucleus. In terms of biological role, early transcription factor that plays a key role in somitogenesis, paraxial mesoderm development and regulation of stem cell pluripotency. Essential for the mesenchymal to epithelial transition associated with somite formation. Required for somite morphogenesis, thereby regulating patterning of the axial skeleton and skeletal muscles. Required for proper localization of somite epithelium markers during the mesenchymal to epithelial transition. Also plays a key role in regulation of stem cell pluripotency. Promotes pluripotency exit of embryonic stem cells (ESCs) by priming ESCs for differentiation. Acts as a key regulator of self-renewal of hematopoietic stem cells (HSCs) by mediating HSCs quiescence and long-term self-renewal. Together with MEOX2, regulates transcription in heart endothelial cells to regulate fatty acid transport across heart endothelial cells. Acts by forming a heterodimer with another helix-loop-helix (bHLH) protein, such as TCF3/E12, that binds DNA on E-box motifs (5'-CANNTG-3') and activates transcription of target genes. This Homo sapiens (Human) protein is Transcription factor 15.